The sequence spans 275 residues: NH(3)-dependent NAD(+) synthetase (275 aa).

Position 39–46 (39–46 (GLSGGVDS)) interacts with ATP. D45 serves as a coordination point for Mg(2+). R124 provides a ligand contact to deamido-NAD(+). T144 contributes to the ATP binding site. A Mg(2+)-binding site is contributed by E149. Deamido-NAD(+) contacts are provided by K157 and D164. ATP is bound by residues K173 and S195. 255–256 (HK) serves as a coordination point for deamido-NAD(+).

It belongs to the NAD synthetase family. In terms of assembly, homodimer.

The enzyme catalyses deamido-NAD(+) + NH4(+) + ATP = AMP + diphosphate + NAD(+) + H(+). It functions in the pathway cofactor biosynthesis; NAD(+) biosynthesis; NAD(+) from deamido-NAD(+) (ammonia route): step 1/1. In terms of biological role, catalyzes the ATP-dependent amidation of deamido-NAD to form NAD. Uses ammonia as a nitrogen source. In Staphylothermus marinus (strain ATCC 43588 / DSM 3639 / JCM 9404 / F1), this protein is NH(3)-dependent NAD(+) synthetase.